A 565-amino-acid polypeptide reads, in one-letter code: Sulfite reductase [NADPH] hemoprotein beta-component (565 aa).

[4Fe-4S] cluster contacts are provided by Cys429, Cys435, Cys474, and Cys478. Cys478 is a siroheme binding site.

The protein belongs to the nitrite and sulfite reductase 4Fe-4S domain family. In terms of assembly, alpha(8)-beta(8). The alpha component is a flavoprotein, the beta component is a hemoprotein. Siroheme serves as cofactor. The cofactor is [4Fe-4S] cluster.

The catalysed reaction is hydrogen sulfide + 3 NADP(+) + 3 H2O = sulfite + 3 NADPH + 4 H(+). The protein operates within sulfur metabolism; hydrogen sulfide biosynthesis; hydrogen sulfide from sulfite (NADPH route): step 1/1. Component of the sulfite reductase complex that catalyzes the 6-electron reduction of sulfite to sulfide. This is one of several activities required for the biosynthesis of L-cysteine from sulfate. The sequence is that of Sulfite reductase [NADPH] hemoprotein beta-component from Pseudoalteromonas translucida (strain TAC 125).